The sequence spans 701 residues: Elongation factor G (701 aa).

The tr-type G domain maps to 8 to 286 (DRVRNIGIIA…AVVLLLPSPL (279 aa)). GTP is bound by residues 17-24 (AHIDAGKT), 85-89 (DTPGH), and 139-142 (NKMD).

This sequence belongs to the TRAFAC class translation factor GTPase superfamily. Classic translation factor GTPase family. EF-G/EF-2 subfamily.

Its subcellular location is the cytoplasm. Its function is as follows. Catalyzes the GTP-dependent ribosomal translocation step during translation elongation. During this step, the ribosome changes from the pre-translocational (PRE) to the post-translocational (POST) state as the newly formed A-site-bound peptidyl-tRNA and P-site-bound deacylated tRNA move to the P and E sites, respectively. Catalyzes the coordinated movement of the two tRNA molecules, the mRNA and conformational changes in the ribosome. In Herpetosiphon aurantiacus (strain ATCC 23779 / DSM 785 / 114-95), this protein is Elongation factor G.